Here is a 282-residue protein sequence, read N- to C-terminus: Plant cysteine oxidase 3 (282 aa).

Fe cation-binding residues include His131, His133, and His202.

Belongs to the cysteine dioxygenase family. Fe(2+) is required as a cofactor.

Its subcellular location is the nucleus. The protein resides in the cytoplasm. It catalyses the reaction L-cysteine + O2 = 3-sulfino-L-alanine + H(+). Its function is as follows. Catalyzes the oxidation of N-terminal cysteine residues (N-Cys), thus preparing the protein for N-end rule pathway-mediated proteasomal degradation, upstream of the N-end rule enzymes ATE1, ATE2 and PRT6. Controls the preparation of the group VII ethylene response factor (ERF-VII) proteins for degradation via the 26S proteasome N-end rule pathway. Acts as an oxygen sensor that controls the stability of ERF-VII proteins, which are stabilized in flooding-induced hypoxia, and regulate transcriptional adaptation to these adverse conditions. This is Plant cysteine oxidase 3 from Arabidopsis thaliana (Mouse-ear cress).